Reading from the N-terminus, the 228-residue chain is ATP synthase subunit a (228 aa).

Helical transmembrane passes span Ala19–Val39, Leu81–Phe101, Ser107–Ile127, Phe136–Ile156, Leu178–Leu198, and Ile204–Val224.

Belongs to the ATPase A chain family. F-type ATPases have 2 components, CF(1) - the catalytic core - and CF(0) - the membrane proton channel. CF(1) has five subunits: alpha(3), beta(3), gamma(1), delta(1), epsilon(1). CF(0) has three main subunits: a(1), b(2) and c(9-12). The alpha and beta chains form an alternating ring which encloses part of the gamma chain. CF(1) is attached to CF(0) by a central stalk formed by the gamma and epsilon chains, while a peripheral stalk is formed by the delta and b chains.

The protein localises to the cell inner membrane. Key component of the proton channel; it plays a direct role in the translocation of protons across the membrane. The chain is ATP synthase subunit a from Campylobacter hominis (strain ATCC BAA-381 / DSM 21671 / CCUG 45161 / LMG 19568 / NCTC 13146 / CH001A).